We begin with the raw amino-acid sequence, 429 residues long: Enolase (429 aa).

Gln-162 contacts (2R)-2-phosphoglycerate. Catalysis depends on Glu-204, which acts as the Proton donor. Residues Asp-241, Glu-283, and Asp-310 each contribute to the Mg(2+) site. The (2R)-2-phosphoglycerate site is built by Lys-335, Arg-364, Ser-365, and Lys-386. Lys-335 serves as the catalytic Proton acceptor.

This sequence belongs to the enolase family. The cofactor is Mg(2+).

It is found in the cytoplasm. The protein resides in the secreted. The protein localises to the cell surface. The catalysed reaction is (2R)-2-phosphoglycerate = phosphoenolpyruvate + H2O. It functions in the pathway carbohydrate degradation; glycolysis; pyruvate from D-glyceraldehyde 3-phosphate: step 4/5. Its function is as follows. Catalyzes the reversible conversion of 2-phosphoglycerate (2-PG) into phosphoenolpyruvate (PEP). It is essential for the degradation of carbohydrates via glycolysis. The sequence is that of Enolase from Mycobacterium leprae (strain TN).